The following is a 393-amino-acid chain: Protein TsgA (393 aa).

The next 12 membrane-spanning stretches (helical) occupy residues 11-31 (WISFLSYALTGALVIVTGMVM), 51-71 (FLNAGILISIFLNAWLMEIVP), 78-98 (FGFLLMVLAVAGLMFSHSLAL), 101-121 (AAMFILGVVSGITMSIGTFLV), 134-154 (LLFTDSFFSMAGMIFPMIAAF), 162-182 (WYWVYACIGLVYVAIFILTFG), 206-226 (IGVLFLSVAALCYILGQLGFI), 245-265 (TLVSNFWMSYMVGMWAFSFIL), 273-293 (ILTVLAGLAAILMYVFNTGTP), 297-317 (AWSILALGFFSSAIYTTIITL), 332-352 (FVLTCGTIGTMLTFVVTGPIV), and 361-381 (LLTANGLYAVVFVMCFLLGFV).

It belongs to the major facilitator superfamily. TsgA family.

The protein localises to the cell inner membrane. In Escherichia coli O6:K15:H31 (strain 536 / UPEC), this protein is Protein TsgA.